A 431-amino-acid chain; its full sequence is 3-phosphoshikimate 1-carboxyvinyltransferase (431 aa).

3-phosphoshikimate contacts are provided by lysine 22, serine 23, and arginine 27. Lysine 22 is a binding site for phosphoenolpyruvate. Positions 94 and 122 each coordinate phosphoenolpyruvate. Residues serine 168, serine 169, glutamine 170, serine 196, aspartate 315, and lysine 342 each contribute to the 3-phosphoshikimate site. Glutamine 170 serves as a coordination point for phosphoenolpyruvate. Aspartate 315 acts as the Proton acceptor in catalysis. The phosphoenolpyruvate site is built by arginine 346, arginine 390, and lysine 414.

It belongs to the EPSP synthase family. In terms of assembly, monomer.

It is found in the cytoplasm. It catalyses the reaction 3-phosphoshikimate + phosphoenolpyruvate = 5-O-(1-carboxyvinyl)-3-phosphoshikimate + phosphate. It functions in the pathway metabolic intermediate biosynthesis; chorismate biosynthesis; chorismate from D-erythrose 4-phosphate and phosphoenolpyruvate: step 6/7. Catalyzes the transfer of the enolpyruvyl moiety of phosphoenolpyruvate (PEP) to the 5-hydroxyl of shikimate-3-phosphate (S3P) to produce enolpyruvyl shikimate-3-phosphate and inorganic phosphate. The chain is 3-phosphoshikimate 1-carboxyvinyltransferase from Nitrosomonas europaea (strain ATCC 19718 / CIP 103999 / KCTC 2705 / NBRC 14298).